We begin with the raw amino-acid sequence, 317 residues long: Putative S-adenosyl-L-methionine-dependent methyltransferase MSMEG_0093 (317 aa).

S-adenosyl-L-methionine-binding positions include aspartate 134 and 163-164; that span reads DL.

It belongs to the UPF0677 family.

Exhibits S-adenosyl-L-methionine-dependent methyltransferase activity. In Mycolicibacterium smegmatis (strain ATCC 700084 / mc(2)155) (Mycobacterium smegmatis), this protein is Putative S-adenosyl-L-methionine-dependent methyltransferase MSMEG_0093.